Consider the following 485-residue polypeptide: Aspartyl/glutamyl-tRNA(Asn/Gln) amidotransferase subunit B (485 aa).

The protein belongs to the GatB/GatE family. GatB subfamily. As to quaternary structure, heterotrimer of A, B and C subunits.

The enzyme catalyses L-glutamyl-tRNA(Gln) + L-glutamine + ATP + H2O = L-glutaminyl-tRNA(Gln) + L-glutamate + ADP + phosphate + H(+). It catalyses the reaction L-aspartyl-tRNA(Asn) + L-glutamine + ATP + H2O = L-asparaginyl-tRNA(Asn) + L-glutamate + ADP + phosphate + 2 H(+). In terms of biological role, allows the formation of correctly charged Asn-tRNA(Asn) or Gln-tRNA(Gln) through the transamidation of misacylated Asp-tRNA(Asn) or Glu-tRNA(Gln) in organisms which lack either or both of asparaginyl-tRNA or glutaminyl-tRNA synthetases. The reaction takes place in the presence of glutamine and ATP through an activated phospho-Asp-tRNA(Asn) or phospho-Glu-tRNA(Gln). The polypeptide is Aspartyl/glutamyl-tRNA(Asn/Gln) amidotransferase subunit B (Rhodospirillum rubrum (strain ATCC 11170 / ATH 1.1.1 / DSM 467 / LMG 4362 / NCIMB 8255 / S1)).